We begin with the raw amino-acid sequence, 411 residues long: Glutamate dehydrogenase A (411 aa).

The active site involves Lys102.

The protein belongs to the Glu/Leu/Phe/Val dehydrogenases family.

The enzyme catalyses L-glutamate + NAD(+) + H2O = 2-oxoglutarate + NH4(+) + NADH + H(+). It catalyses the reaction L-glutamate + NADP(+) + H2O = 2-oxoglutarate + NH4(+) + NADPH + H(+). The sequence is that of Glutamate dehydrogenase A (GDHA) from Nicotiana plumbaginifolia (Leadwort-leaved tobacco).